A 511-amino-acid polypeptide reads, in one-letter code: Cytochrome P450 monooxygenase cypX (511 aa).

The helical transmembrane segment at 18–38 threads the bilayer; it reads LPFSLALVAAAFVLYNIVSII. N-linked (GlcNAc...) asparagine glycosylation is found at Asn-162 and Asn-407. Cys-454 provides a ligand contact to heme.

It belongs to the cytochrome P450 family. Heme is required as a cofactor.

It is found in the membrane. Its pathway is mycotoxin biosynthesis. Cytochrome P450 monooxygenase; part of the fragmented gene cluster that mediates the biosynthesis of dothistromin (DOTH), a polyketide toxin very similar in structure to the aflatoxin precursor, versicolorin B. The first step of the pathway is the conversion of acetate to norsolorinic acid (NOR) and requires the fatty acid synthase subunits hexA and hexB, as well as the polyketide synthase pksA. PksA combines a hexanoyl starter unit and 7 malonyl-CoA extender units to synthesize the precursor NOR. The hexanoyl starter unit is provided to the acyl-carrier protein (ACP) domain by the fungal fatty acid synthase hexA/hexB. The second step is the conversion of NOR to averantin (AVN) and requires the norsolorinic acid ketoreductase nor1, which catalyzes the dehydration of norsolorinic acid to form (1'S)-averantin. The cytochrome P450 monooxygenase avnA then catalyzes the hydroxylation of AVN to 5'hydroxyaverantin (HAVN). The next step is performed by adhA that transforms HAVN to averufin (AVF). Averufin might then be converted to hydroxyversicolorone by cypX and avfA. Hydroxyversicolorone is further converted versiconal hemiacetal acetate (VHA) by moxY. VHA is then the substrate for the versiconal hemiacetal acetate esterase est1 to yield versiconal (VAL). Versicolorin B synthase vbsA then converts VAL to versicolorin B (VERB) by closing the bisfuran ring. Then, the activity of the versicolorin B desaturase verB leads to versicolorin A (VERA). DotB, a predicted chloroperoxidase, may perform epoxidation of the A-ring of VERA. Alternatively, a cytochrome P450, such as cypX or avnA could catalyze this step. It is also possible that another, uncharacterized, cytochrome P450 enzyme is responsible for this step. Opening of the epoxide could potentially be achieved by the epoxide hydrolase epoA. However, epoA seems not to be required for DOTH biosynthesis, but other epoxide hydrolases may have the ability to complement this hydrolysis. Alternatively, opening of the epoxide ring could be achieved non-enzymatically. The next step is the deoxygenation of ring A to yield the 5,8-dihydroxyanthraquinone which is most likely catalyzed by the NADPH dehydrogenase encoded by ver1. The last stages of DOTH biosynthesis are proposed to involve hydroxylation of the bisfuran. OrdB and norB might have oxidative roles here. An alternative possibility is that cytochrome P450 monoogenases such as avnA and cypX might perform these steps in addition to previously proposed steps. The protein is Cytochrome P450 monooxygenase cypX of Dothistroma septosporum (Red band needle blight fungus).